Here is a 353-residue protein sequence, read N- to C-terminus: Aromatic amino acid aminotransferase (353 aa).

Lys217 carries the post-translational modification N6-(pyridoxal phosphate)lysine.

Belongs to the class-II pyridoxal-phosphate-dependent aminotransferase family. In terms of assembly, homodimer. Pyridoxal 5'-phosphate is required as a cofactor.

The enzyme catalyses an aromatic L-alpha-amino acid + 2-oxoglutarate = an aromatic oxo-acid + L-glutamate. Functionally, aminotransferase that catalyzes the conversion of aromatic amino acids and 2-oxoglutarate into corresponding aromatic oxo acids and L-glutamate. The chain is Aromatic amino acid aminotransferase from Mycobacterium bovis (strain ATCC BAA-935 / AF2122/97).